Consider the following 383-residue polypeptide: Queuine tRNA-ribosyltransferase (383 aa).

The active-site Proton acceptor is Asp90. Residues 90 to 94 (DSGGF), Asp144, Gln193, and Gly227 each bind substrate. The interval 258-264 (GVGTPED) is RNA binding. Residue Asp277 is the Nucleophile of the active site. Residues 282–286 (TRNAR) form an RNA binding; important for wobble base 34 recognition region. Zn(2+)-binding residues include Cys315, Cys317, Cys320, and His346.

This sequence belongs to the queuine tRNA-ribosyltransferase family. As to quaternary structure, homodimer. Within each dimer, one monomer is responsible for RNA recognition and catalysis, while the other monomer binds to the replacement base PreQ1. It depends on Zn(2+) as a cofactor.

It catalyses the reaction 7-aminomethyl-7-carbaguanine + guanosine(34) in tRNA = 7-aminomethyl-7-carbaguanosine(34) in tRNA + guanine. It participates in tRNA modification; tRNA-queuosine biosynthesis. Catalyzes the base-exchange of a guanine (G) residue with the queuine precursor 7-aminomethyl-7-deazaguanine (PreQ1) at position 34 (anticodon wobble position) in tRNAs with GU(N) anticodons (tRNA-Asp, -Asn, -His and -Tyr). Catalysis occurs through a double-displacement mechanism. The nucleophile active site attacks the C1' of nucleotide 34 to detach the guanine base from the RNA, forming a covalent enzyme-RNA intermediate. The proton acceptor active site deprotonates the incoming PreQ1, allowing a nucleophilic attack on the C1' of the ribose to form the product. After dissociation, two additional enzymatic reactions on the tRNA convert PreQ1 to queuine (Q), resulting in the hypermodified nucleoside queuosine (7-(((4,5-cis-dihydroxy-2-cyclopenten-1-yl)amino)methyl)-7-deazaguanosine). The sequence is that of Queuine tRNA-ribosyltransferase from Ralstonia nicotianae (strain ATCC BAA-1114 / GMI1000) (Ralstonia solanacearum).